The primary structure comprises 341 residues: Formimidoylglutamase (341 aa).

Positions 133, 162, 164, 166, 253, and 255 each coordinate Mn(2+).

This sequence belongs to the arginase family. It depends on Mn(2+) as a cofactor.

The enzyme catalyses N-formimidoyl-L-glutamate + H2O = formamide + L-glutamate. It participates in amino-acid degradation; L-histidine degradation into L-glutamate; L-glutamate from N-formimidoyl-L-glutamate (hydrolase route): step 1/1. In terms of biological role, catalyzes the conversion of N-formimidoyl-L-glutamate to L-glutamate and formamide. This is Formimidoylglutamase from Aromatoleum aromaticum (strain DSM 19018 / LMG 30748 / EbN1) (Azoarcus sp. (strain EbN1)).